Here is a 384-residue protein sequence, read N- to C-terminus: 8-amino-7-oxononanoate synthase (384 aa).

Arg21 contributes to the substrate binding site. Pyridoxal 5'-phosphate is bound at residue 108–109; it reads GF. His133 lines the substrate pocket. Positions 179, 207, and 233 each coordinate pyridoxal 5'-phosphate. Lys236 carries the N6-(pyridoxal phosphate)lysine modification. Residue Thr352 coordinates substrate.

Belongs to the class-II pyridoxal-phosphate-dependent aminotransferase family. BioF subfamily. Homodimer. The cofactor is pyridoxal 5'-phosphate.

It catalyses the reaction 6-carboxyhexanoyl-[ACP] + L-alanine + H(+) = (8S)-8-amino-7-oxononanoate + holo-[ACP] + CO2. Its pathway is cofactor biosynthesis; biotin biosynthesis. In terms of biological role, catalyzes the decarboxylative condensation of pimeloyl-[acyl-carrier protein] and L-alanine to produce 8-amino-7-oxononanoate (AON), [acyl-carrier protein], and carbon dioxide. This Escherichia coli O157:H7 protein is 8-amino-7-oxononanoate synthase.